We begin with the raw amino-acid sequence, 388 residues long: Protein YnjB (388 aa).

Residues 333–357 are disordered; it reads AVWGDPSVLDPQKLPDGQRESLQSR.

The polypeptide is Protein YnjB (ynjB) (Escherichia coli (strain K12)).